Consider the following 649-residue polypeptide: Golgin subfamily A member 6-like protein 26 (649 aa).

Disordered regions lie at residues 1–94 (MWPQ…HQEA), 300–330 (QEEKIREQEEKMRRQEEMMWEKEEKMRRQEE), 358–440 (EKMH…EMWR), 455–572 (KEKM…REQE), and 584–620 (EQEEMMQEQEEKMWEQEEKMCEQEEKMQEQEEKMRRQ). Positions 10 to 23 (HPHLPTHPHLPTHP) are enriched in low complexity. The span at 25–46 (MSKETRQSKLAEAKEQLTDHHP) shows a compositional bias: basic and acidic residues. Polar residues-rich tracts occupy residues 47-57 (QTNPSVGTAAS) and 65-77 (NNGTNPETTTSGG). A compositionally biased stretch (basic and acidic residues) spans 80-94 (SPEDEQKASHQHQEA). Positions 151–644 (LEQALSAVAT…EEKMQEHQEH (494 aa)) form a coiled coil.

This sequence belongs to the GOLGA6 family.

In Homo sapiens (Human), this protein is Golgin subfamily A member 6-like protein 26 (GOLGA6L26).